The following is a 459-amino-acid chain: MIQKQHESKLEVGQTFPVTIKRLGINGEGVGYFKRQVVFIPGALPGEEVVAETTKIQRGFAEAKVKKVRKASPHRVKAPCPVYEECGGCQLQHLDYKEQLNQKRDIVVQAFEKYMKNSMEEKIRPTLGMENPWHYRNKSQLQVGRKDEKVITGLYKQNSHQLIDIAHCMIQHKATNEATKVVRRILEKLNVSIYNEKKQKGLVRTIVTRTAVQTGEVQVTLITTKEELPNKEQFIAEVQKQMPAVKSIMQNVNWRKTSVIFGDKTFKLAGKEVIQETLGDLSFELSARAFFQLNPEQTVVLYNEAKKAAALTGNEKIVDAYCGVGTIGLWLANDAAEVRGMDVIPEAIADARKNAKRHGFTNTKYEAGKAEQWLPKWVKEGWRPDVIVVDPPRTGCDDKLLETILKVKPKQVVYVSCNPSSLARDVQALMKSYEVEYVQPVDMFPHTAHVENVVKLTLK.

The TRAM domain maps to 9-67 (KLEVGQTFPVTIKRLGINGEGVGYFKRQVVFIPGALPGEEVVAETTKIQRGFAEAKVKK). Positions 80, 86, 89, and 168 each coordinate [4Fe-4S] cluster. Positions 292, 321, 342, and 390 each coordinate S-adenosyl-L-methionine. The active-site Nucleophile is the cysteine 417.

The protein belongs to the class I-like SAM-binding methyltransferase superfamily. RNA M5U methyltransferase family.

This is an uncharacterized protein from Bacillus anthracis.